A 355-amino-acid chain; its full sequence is Erythronate-4-phosphate dehydrogenase (355 aa).

S45 and T66 together coordinate substrate. Residue D146 participates in NAD(+) binding. Residue R206 is part of the active site. An NAD(+)-binding site is contributed by D229. E234 is an active-site residue. H251 (proton donor) is an active-site residue. G254 contributes to the NAD(+) binding site. Y255 is a binding site for substrate.

The protein belongs to the D-isomer specific 2-hydroxyacid dehydrogenase family. PdxB subfamily. Homodimer.

Its subcellular location is the cytoplasm. The enzyme catalyses 4-phospho-D-erythronate + NAD(+) = (R)-3-hydroxy-2-oxo-4-phosphooxybutanoate + NADH + H(+). Its pathway is cofactor biosynthesis; pyridoxine 5'-phosphate biosynthesis; pyridoxine 5'-phosphate from D-erythrose 4-phosphate: step 2/5. In terms of biological role, catalyzes the oxidation of erythronate-4-phosphate to 3-hydroxy-2-oxo-4-phosphonooxybutanoate. This is Erythronate-4-phosphate dehydrogenase from Acinetobacter baylyi (strain ATCC 33305 / BD413 / ADP1).